A 293-amino-acid chain; its full sequence is 4-hydroxy-tetrahydrodipicolinate synthase (293 aa).

T51 lines the pyruvate pocket. The Proton donor/acceptor role is filled by Y140. The active-site Schiff-base intermediate with substrate is K168. I209 lines the pyruvate pocket.

This sequence belongs to the DapA family. In terms of assembly, homotetramer; dimer of dimers.

The protein resides in the cytoplasm. The enzyme catalyses L-aspartate 4-semialdehyde + pyruvate = (2S,4S)-4-hydroxy-2,3,4,5-tetrahydrodipicolinate + H2O + H(+). The protein operates within amino-acid biosynthesis; L-lysine biosynthesis via DAP pathway; (S)-tetrahydrodipicolinate from L-aspartate: step 3/4. Its function is as follows. Catalyzes the condensation of (S)-aspartate-beta-semialdehyde [(S)-ASA] and pyruvate to 4-hydroxy-tetrahydrodipicolinate (HTPA). The protein is 4-hydroxy-tetrahydrodipicolinate synthase of Streptococcus mutans serotype c (strain ATCC 700610 / UA159).